An 844-amino-acid chain; its full sequence is Prickle-like protein 2 (844 aa).

One can recognise a PET domain in the interval 18-126 (FDFQRNSTSD…NVRPFPVTMT (109 aa)). Ser-92 carries the phosphoserine modification. LIM zinc-binding domains follow at residues 128–193 (AICE…CLKP), 193–253 (PRCA…LYAE), and 253–317 (EYCD…EDPN). Disordered stretches follow at residues 314–350 (EDPN…TEEP) and 481–519 (ESYS…QQCR). Positions 318–327 (GSDSSDSAFQ) are enriched in polar residues. Ser-319, Ser-321, and Ser-322 each carry phosphoserine. Low complexity predominate over residues 481–493 (ESYSDMSSQSFSE). Residues Thr-534, Thr-536, and Thr-539 each carry the phosphothreonine modification. A phosphoserine mark is found at Ser-543, Ser-546, Ser-607, and Ser-642. The interval 639 to 709 (MHQSFDFDGG…HLASEREAIS (71 aa)) is disordered. The segment covering 682–692 (FRPHRSRRSRR) has biased composition (basic residues). The span at 693-709 (SRSDNALHLASEREAIS) shows a compositional bias: basic and acidic residues. Position 731 is a phosphoserine (Ser-731). Positions 822–844 (STLGGRGQLHSRKRQKSKNCIIS) are disordered. Cys-841 is modified (cysteine methyl ester). Cys-841 is lipidated: S-farnesyl cysteine. The propeptide at 842 to 844 (IIS) is removed in mature form.

It belongs to the prickle / espinas / testin family. As to expression, expressed in brain, eye and testis. Additionally in fetal brain, adult cartilage, pancreatic islet, gastric cancer and uterus tumors.

Its subcellular location is the nucleus membrane. This chain is Prickle-like protein 2 (PRICKLE2), found in Homo sapiens (Human).